A 471-amino-acid chain; its full sequence is D-hydantoinase (471 aa).

H58, H60, and K150 together coordinate Zn(2+). Residue K150 is modified to N6-carboxylysine. A substrate-binding site is contributed by Y155. Positions 183 and 239 each coordinate Zn(2+). S288 lines the substrate pocket. D315 is a binding site for Zn(2+). N337 provides a ligand contact to substrate.

This sequence belongs to the metallo-dependent hydrolases superfamily. Hydantoinase/dihydropyrimidinase family. Homotetramer. Zn(2+) is required as a cofactor. The cofactor is Ni(2+). Co(2+) serves as cofactor. It depends on Mn(2+) as a cofactor. Post-translationally, carboxylation allows a single lysine to coordinate two zinc ions.

With respect to regulation, completely inhibited by p-chloromercuribenzoate and partially inhibited by metal chelating agents. Functionally, catalyzes the stereospecific hydrolysis of the cyclic amide bond of D-hydantoin. Has no activity on dihydropyrimidines. This Geobacillus stearothermophilus (Bacillus stearothermophilus) protein is D-hydantoinase.